A 229-amino-acid polypeptide reads, in one-letter code: uncharacterized protein (229 aa).

This is an uncharacterized protein from Treponema pallidum (strain Nichols).